The sequence spans 219 residues: PRELI domain-containing protein 1, mitochondrial (219 aa).

The PRELI/MSF1 domain maps to 36 to 174 (TEDIVHREVT…ILAKLQGEAP (139 aa)).

As to quaternary structure, forms a complex with TRIAP1 in the mitochondrion intermembrane space. Interacts with OPA1 and AIFM1. As to expression, highly expressed in fetal liver; less expressed in fetal brain, lung, and kidney. At the adult stage, expression is drastically reduced in the liver but highly expressed in the spleen, brain, lung, lymph nodes and peripheral blood leukocytes.

It is found in the mitochondrion. The protein resides in the mitochondrion intermembrane space. The enzyme catalyses a 1,2-diacyl-sn-glycero-3-phosphate(in) = a 1,2-diacyl-sn-glycero-3-phosphate(out). Functionally, involved in the modulation of the mitochondrial apoptotic pathway by ensuring the accumulation of cardiolipin (CL) in mitochondrial membranes. In vitro, the TRIAP1:PRELID1 complex mediates the transfer of phosphatidic acid (PA) between liposomes and probably functions as a PA transporter across the mitochondrion intermembrane space to provide PA for CL synthesis in the inner membrane. Regulates the mitochondrial apoptotic pathway in primary Th cells. Regulates Th cell differentiation by down-regulating STAT6 thereby reducing IL-4-induced Th2 cell number. May be important for the development of vital and immunocompetent organs. This chain is PRELI domain-containing protein 1, mitochondrial (PRELID1), found in Homo sapiens (Human).